The primary structure comprises 236 residues: Lectin (236 aa).

A glycan (N-linked (GlcNAc...) asparagine) is linked at Asn-118.

The protein belongs to the leguminous lectin family. In terms of assembly, homodimer of noncovalently associated chains.

In terms of biological role, D-mannose and D-glucose specific lectin. The polypeptide is Lectin (Onobrychis viciifolia (Common sainfoin)).